A 256-amino-acid polypeptide reads, in one-letter code: Coiled-coil domain-containing protein 90B, mitochondrial (256 aa).

The transit peptide at 1-42 (MRNRWIWRFLRPECSGIRWISSPHGRLSPALRRGFLTTTTKS) directs the protein to the mitochondrion. A coiled-coil region spans residues 106–164 (AQQEITIQQLMAHLDSIRKDMVILEKSEFANLRAENEKMKIELDQVKQQLINETSRIRA). Residues 231 to 253 (TIRYLAASVFTCLAIALGFYRFW) traverse the membrane as a helical segment.

Belongs to the CCDC90 family. Interacts with MCU.

The protein resides in the mitochondrion membrane. This chain is Coiled-coil domain-containing protein 90B, mitochondrial (Ccdc90b), found in Rattus norvegicus (Rat).